A 347-amino-acid polypeptide reads, in one-letter code: Protein RecA (347 aa).

ATP is bound at residue 66–73; that stretch reads GPESSGKT. Residues 328 to 347 are disordered; sequence MPKPNAPKATDEALDETGTD.

The protein belongs to the RecA family.

It localises to the cytoplasm. Functionally, can catalyze the hydrolysis of ATP in the presence of single-stranded DNA, the ATP-dependent uptake of single-stranded DNA by duplex DNA, and the ATP-dependent hybridization of homologous single-stranded DNAs. It interacts with LexA causing its activation and leading to its autocatalytic cleavage. This chain is Protein RecA, found in Hydrogenovibrio crunogenus (strain DSM 25203 / XCL-2) (Thiomicrospira crunogena).